A 115-amino-acid polypeptide reads, in one-letter code: MLKETIRSGDWKGEKHVPVIEYEREGDLVKVEVSVGKEIPHPNTPEHHIAWIELYFHPEGGQFPILVGRVEFTNHSDPLTEPRAVFFFKTSKKGKLYALSYCNIHGLWENEVQLE.

The Fe cation site is built by Glu-14, His-16, His-41, His-47, Cys-102, and His-105.

Belongs to the desulfoferrodoxin family. As to quaternary structure, homotetramer. Requires Fe cation as cofactor.

The catalysed reaction is reduced [rubredoxin] + superoxide + 2 H(+) = oxidized [rubredoxin] + H2O2. In terms of biological role, uses electrons from reduced NADP, by way of rubredoxin and an oxidoreductase, to catalyze the reduction of superoxide to hydrogen peroxide. The polypeptide is Superoxide reductase (sorA) (Pyrococcus horikoshii (strain ATCC 700860 / DSM 12428 / JCM 9974 / NBRC 100139 / OT-3)).